A 331-amino-acid chain; its full sequence is 6-phosphogluconolactonase (331 aa).

This sequence belongs to the cycloisomerase 2 family.

The catalysed reaction is 6-phospho-D-glucono-1,5-lactone + H2O = 6-phospho-D-gluconate + H(+). It participates in carbohydrate degradation; pentose phosphate pathway; D-ribulose 5-phosphate from D-glucose 6-phosphate (oxidative stage): step 2/3. Its function is as follows. Catalyzes the hydrolysis of 6-phosphogluconolactone to 6-phosphogluconate. This chain is 6-phosphogluconolactonase, found in Klebsiella pneumoniae subsp. pneumoniae (strain ATCC 700721 / MGH 78578).